The primary structure comprises 81 residues: Protein L83L (81 aa).

The tract at residues 1–28 (MDTSLKNNDGALDADNKNYQDYKDEPDK) is disordered. Residues 14–28 (ADNKNYQDYKDEPDK) are compositionally biased toward basic and acidic residues.

This sequence belongs to the asfivirus L83L family. Interacts with host IL1B.

The protein localises to the host cytoplasm. May subvert the host innate immune response by interacting with host IL1B and interfering with its function. This is Protein L83L from African swine fever virus (isolate Tick/South Africa/Pretoriuskop Pr4/1996) (ASFV).